The chain runs to 515 residues: 2,3-bisphosphoglycerate-independent phosphoglycerate mutase (515 aa).

2 residues coordinate Mn(2+): aspartate 17 and serine 67. Residue serine 67 is the Phosphoserine intermediate of the active site. Residues histidine 128, 157-158, arginine 190, arginine 196, 262-265, and lysine 336 each bind substrate; these read RD and RADR. 5 residues coordinate Mn(2+): aspartate 403, histidine 407, aspartate 444, histidine 445, and histidine 463.

This sequence belongs to the BPG-independent phosphoglycerate mutase family. In terms of assembly, monomer. Mn(2+) serves as cofactor.

The catalysed reaction is (2R)-2-phosphoglycerate = (2R)-3-phosphoglycerate. The protein operates within carbohydrate degradation; glycolysis; pyruvate from D-glyceraldehyde 3-phosphate: step 3/5. In terms of biological role, catalyzes the interconversion of 2-phosphoglycerate and 3-phosphoglycerate. This is 2,3-bisphosphoglycerate-independent phosphoglycerate mutase from Acinetobacter baylyi (strain ATCC 33305 / BD413 / ADP1).